The following is a 240-amino-acid chain: Seed lectin (240 aa).

Residue N111 is glycosylated (N-linked (GlcNAc...) asparagine). Mn(2+) is bound by residues E123 and D125. 3 residues coordinate Ca(2+): D125, N129, and D132. Residues D132 and H137 each coordinate Mn(2+). A glycan (N-linked (GlcNAc...) asparagine) is linked at N183.

Belongs to the leguminous lectin family. As to quaternary structure, homotetramer. Post-translationally, partially N-glycosylated at Asn-111 and Asn-183 with the heptasaccharide [(beta-xylosyl-1,2)(alpha-mannosyl-1,6)(alpha-mannosyl-1,3)]beta-manosyl-1,4-GlcNAC-beta-1,4-GlcNAc-beta-1,4 [alpha-fucosyl-1,3]GlcNAc. A small proportion of alpha chains are proteolytically cleaved at 114-115 into gamma and beta chains. This is probably dependent on the deglycosylation of Asn-111. As to expression, seed.

Functionally, lectin that binds galactose. This Vatairea macrocarpa protein is Seed lectin.